The sequence spans 307 residues: Ribosomal protein L11 methyltransferase (307 aa).

S-adenosyl-L-methionine contacts are provided by Thr156, Gly177, Asp199, and Asn243.

The protein belongs to the methyltransferase superfamily. PrmA family.

The protein resides in the cytoplasm. It catalyses the reaction L-lysyl-[protein] + 3 S-adenosyl-L-methionine = N(6),N(6),N(6)-trimethyl-L-lysyl-[protein] + 3 S-adenosyl-L-homocysteine + 3 H(+). Methylates ribosomal protein L11. In Syntrophomonas wolfei subsp. wolfei (strain DSM 2245B / Goettingen), this protein is Ribosomal protein L11 methyltransferase.